The following is a 222-amino-acid chain: Inositol diphosphatase DSP1 (222 aa).

Over residues 1 to 14 the composition is skewed to polar residues; sequence MRQEATCSLVLTQD. The segment at 1–41 is disordered; the sequence is MRQEATCSLVLTQDAQHRKNQPPLAEEDDDRDHTDDAMPPP. The 155-residue stretch at 68-222 folds into the Tyrosine-protein phosphatase domain; that stretch reads NFAMVDHGVY…LKHLPASFSC (155 aa). Positions 124 to 136 are WPD loop important for active site topology; sequence FGIDGSKEPFVNI. The 1D-myo-inositol hexakisphosphate site is built by Asn-135, Ile-136, and Arg-140. Cys-160 serves as the catalytic Phosphocysteine intermediate.

Belongs to the protein-tyrosine phosphatase family. Atypical dual-specificity phosphatase Siw14-like subfamily.

The protein resides in the nucleus. Its subcellular location is the cytoplasm. It carries out the reaction 5-diphospho-1D-myo-inositol 1,2,3,4,6-pentakisphosphate + H2O = 1D-myo-inositol hexakisphosphate + phosphate + H(+). It catalyses the reaction 1,5-bis(diphospho)-1D-myo-inositol 2,3,4,6-tetrakisphosphate + H2O = 1-diphospho-1D-myo-inositol 2,3,4,5,6-pentakisphosphate + phosphate + 2 H(+). The enzyme catalyses 3,5-bis(diphospho)-1D-myo-inositol 1,2,4,6-tetrakisphosphate + H2O = 3-diphospho-1D-myo-inositol 1,2,4,5,6-pentakisphosphate + phosphate + 2 H(+). The catalysed reaction is 6-diphospho-1D-myo-inositol pentakisphosphate + H2O = 1D-myo-inositol hexakisphosphate + phosphate + H(+). Cleaves the beta-phosphate at the 5-position of soluble inositol pyrophosphates. Has highest activity on 5-diphosphoinositol 1,2,3,4,6-pentakisphosphate (5-InsP(7)). Possesses phosphotyrosine phosphatase activity in vitro. May contribute to regulation of drought stress responses. The sequence is that of Inositol diphosphatase DSP1 from Oryza sativa subsp. japonica (Rice).